Reading from the N-terminus, the 396-residue chain is MTPISERPIRIGIVAGEASGDLLGAGLMQEIKALYPQATFEGIGGERMLKEGFNTFFQMERLSIMGLVEVLGRLPELLAMRRRIVDHFTATPPDLFLGIDSPDFTIGIELKLRQAGIKTAHYVSPSVWAWRQNRVFKIAKAVDLMLTLLPFEARFYREHNVPVKFVGHPLAEIIPLHPDKVAMRHELGIDASGEVIAVLPGSRGGEVSRLGPTFIETIAWLHQRRPDVRFVIPAANQARKTQIEQQLQSHGGRLPVTLIDQHSRECMMAADAILLASGTATLEAMLVKRPMVVAYKLATLSYWIMRRLLKAKYISLPNLLADKALVPELIQNDATPAKLGEALLKELNVERRRSLEDEFEGLHKLIRQNASVAAAQAVAELIEKGRVATHDAREGH.

Belongs to the LpxB family.

It catalyses the reaction a lipid X + a UDP-2-N,3-O-bis[(3R)-3-hydroxyacyl]-alpha-D-glucosamine = a lipid A disaccharide + UDP + H(+). It participates in bacterial outer membrane biogenesis; LPS lipid A biosynthesis. Condensation of UDP-2,3-diacylglucosamine and 2,3-diacylglucosamine-1-phosphate to form lipid A disaccharide, a precursor of lipid A, a phosphorylated glycolipid that anchors the lipopolysaccharide to the outer membrane of the cell. The protein is Lipid-A-disaccharide synthase of Hahella chejuensis (strain KCTC 2396).